The primary structure comprises 559 residues: NAD-dependent histone deacetylase SIR2 (559 aa).

The tract at residues 1 to 73 (MSESASMLQG…NDHSAQEVAG (73 aa)) is disordered. Residues 39-51 (NDEKELLEATKAD) show a composition bias toward basic and acidic residues. A compositionally biased stretch (acidic residues) spans 52–62 (ELDEVVDDYAE). One can recognise a Deacetylase sirtuin-type domain in the interval 223–514 (RLANFFTLDH…AFIAQKCGWD (292 aa)). NAD(+) contacts are provided by residues 248–267 (GAGI…KGFY) and 330–333 (QNID). The active-site Proton acceptor is the histidine 350. Residues cysteine 358, cysteine 361, cysteine 382, and cysteine 385 each coordinate Zn(2+). NAD(+) contacts are provided by residues 458–460 (GTS), 483–485 (NRD), and cysteine 500.

The protein belongs to the sirtuin family. Class I subfamily. Zn(2+) serves as cofactor.

It is found in the nucleus. It catalyses the reaction N(6)-acetyl-L-lysyl-[protein] + NAD(+) + H2O = 2''-O-acetyl-ADP-D-ribose + nicotinamide + L-lysyl-[protein]. NAD-dependent deacetylase. Heterochromatin component that silences transcription at silent mating loci, telomeres and the ribosomal DNA, and that also suppresses recombination in the rDNA and extends replicative life span. It acts as a NAD-dependent histone deacetylase, which deacetylates 'Lys-9' and 'Lys-14' of Histone H3 and 'Lys-16' of Histone H4. This is NAD-dependent histone deacetylase SIR2 (SIR2) from Eremothecium gossypii (strain ATCC 10895 / CBS 109.51 / FGSC 9923 / NRRL Y-1056) (Yeast).